A 393-amino-acid polypeptide reads, in one-letter code: Protein TsgA (393 aa).

The next 12 membrane-spanning stretches (helical) occupy residues W11 to M31, F51 to P71, F78 to L98, A101 to I121, L134 to F154, W162 to G182, I206 to I226, A245 to L265, I273 to Q293, W298 to G318, F332 to V352, and L361 to V381.

This sequence belongs to the major facilitator superfamily. TsgA family.

The protein resides in the cell inner membrane. This chain is Protein TsgA, found in Salmonella schwarzengrund (strain CVM19633).